The primary structure comprises 38 residues: Zinc-containing ferredoxin (38 aa).

A compositionally biased stretch (polar residues) spans 1–11; it reads GIDPNFRTSRP. Residues 1-38 are disordered; it reads GIDPNFRTSRPVTGDHAGHKVYAPADPPVKEKALGIHG. The interval 1–38 is N-terminal extension; that stretch reads GIDPNFRTSRPVTGDHAGHKVYAPADPPVKEKALGIHG. The Zn(2+) site is built by His-16 and His-19. The span at 28–38 shows a compositional bias: basic and acidic residues; sequence PVKEKALGIHG. Lys-30 bears the N6-methyllysine mark. His-37 is a binding site for Zn(2+).

It depends on [3Fe-4S] cluster as a cofactor. The cofactor is [4Fe-4S] cluster. Zn(2+) serves as cofactor.

In terms of biological role, ferredoxins are iron-sulfur proteins that transfer electrons in a wide variety of metabolic reactions. This chain is Zinc-containing ferredoxin (zfx), found in Metallosphaera prunae.